The following is a 98-amino-acid chain: NADH-ubiquinone oxidoreductase chain 4L (98 aa).

A run of 3 helical transmembrane segments spans residues 1–21 (MPYIYMNITLAFVISLIGTLM), 29–49 (SLLCLEGMMLSLFTLNALLSL), and 61–81 (LILLVFAACEAAVGLALLVMI).

The protein belongs to the complex I subunit 4L family. In terms of assembly, core subunit of respiratory chain NADH dehydrogenase (Complex I) which is composed of 45 different subunits.

The protein localises to the mitochondrion inner membrane. The enzyme catalyses a ubiquinone + NADH + 5 H(+)(in) = a ubiquinol + NAD(+) + 4 H(+)(out). Its function is as follows. Core subunit of the mitochondrial membrane respiratory chain NADH dehydrogenase (Complex I) which catalyzes electron transfer from NADH through the respiratory chain, using ubiquinone as an electron acceptor. Part of the enzyme membrane arm which is embedded in the lipid bilayer and involved in proton translocation. In Loxodonta africana (African elephant), this protein is NADH-ubiquinone oxidoreductase chain 4L (MT-ND4L).